The sequence spans 179 residues: Crossover junction endodeoxyribonuclease RuvC (179 aa).

Catalysis depends on residues D7, E67, and D139. D7, E67, and D139 together coordinate Mg(2+).

The protein belongs to the RuvC family. In terms of assembly, homodimer which binds Holliday junction (HJ) DNA. The HJ becomes 2-fold symmetrical on binding to RuvC with unstacked arms; it has a different conformation from HJ DNA in complex with RuvA. In the full resolvosome a probable DNA-RuvA(4)-RuvB(12)-RuvC(2) complex forms which resolves the HJ. The cofactor is Mg(2+).

The protein localises to the cytoplasm. It catalyses the reaction Endonucleolytic cleavage at a junction such as a reciprocal single-stranded crossover between two homologous DNA duplexes (Holliday junction).. Functionally, the RuvA-RuvB-RuvC complex processes Holliday junction (HJ) DNA during genetic recombination and DNA repair. Endonuclease that resolves HJ intermediates. Cleaves cruciform DNA by making single-stranded nicks across the HJ at symmetrical positions within the homologous arms, yielding a 5'-phosphate and a 3'-hydroxyl group; requires a central core of homology in the junction. The consensus cleavage sequence is 5'-(A/T)TT(C/G)-3'. Cleavage occurs on the 3'-side of the TT dinucleotide at the point of strand exchange. HJ branch migration catalyzed by RuvA-RuvB allows RuvC to scan DNA until it finds its consensus sequence, where it cleaves and resolves the cruciform DNA. In Sorangium cellulosum (strain So ce56) (Polyangium cellulosum (strain So ce56)), this protein is Crossover junction endodeoxyribonuclease RuvC.